We begin with the raw amino-acid sequence, 312 residues long: DNA-directed RNA polymerase subunit alpha (312 aa).

The interval 1 to 226 (MIEFEKPNIT…EHLDLFTDLT (226 aa)) is alpha N-terminal domain (alpha-NTD). The interval 244–312 (DHVLERTIEE…DLGLGLKNDK (69 aa)) is alpha C-terminal domain (alpha-CTD).

This sequence belongs to the RNA polymerase alpha chain family. Homodimer. The RNAP catalytic core consists of 2 alpha, 1 beta, 1 beta' and 1 omega subunit. When a sigma factor is associated with the core the holoenzyme is formed, which can initiate transcription.

The catalysed reaction is RNA(n) + a ribonucleoside 5'-triphosphate = RNA(n+1) + diphosphate. DNA-dependent RNA polymerase catalyzes the transcription of DNA into RNA using the four ribonucleoside triphosphates as substrates. The sequence is that of DNA-directed RNA polymerase subunit alpha from Streptococcus gordonii (strain Challis / ATCC 35105 / BCRC 15272 / CH1 / DL1 / V288).